Consider the following 196-residue polypeptide: Large ribosomal subunit protein bL25 (196 aa).

It belongs to the bacterial ribosomal protein bL25 family. CTC subfamily. As to quaternary structure, part of the 50S ribosomal subunit; part of the 5S rRNA/L5/L18/L25 subcomplex. Contacts the 5S rRNA. Binds to the 5S rRNA independently of L5 and L18.

Its function is as follows. This is one of the proteins that binds to the 5S RNA in the ribosome where it forms part of the central protuberance. This chain is Large ribosomal subunit protein bL25, found in Geotalea daltonii (strain DSM 22248 / JCM 15807 / FRC-32) (Geobacter daltonii).